Here is a 540-residue protein sequence, read N- to C-terminus: Sterol 14-alpha demethylase (540 aa).

A helical transmembrane segment spans residues 41 to 61; that stretch reads PLFLVSGFLGVCVAYAVANII. Cys485 is a heme binding site.

Belongs to the cytochrome P450 family. Heme is required as a cofactor.

Its subcellular location is the membrane. It carries out the reaction a 14alpha-methyl steroid + 3 reduced [NADPH--hemoprotein reductase] + 3 O2 = a Delta(14) steroid + formate + 3 oxidized [NADPH--hemoprotein reductase] + 4 H2O + 4 H(+). The enzyme catalyses a 14alpha-methyl steroid + reduced [NADPH--hemoprotein reductase] + O2 = a 14alpha-hydroxymethyl steroid + oxidized [NADPH--hemoprotein reductase] + H2O + H(+). The catalysed reaction is a 14alpha-hydroxymethyl steroid + reduced [NADPH--hemoprotein reductase] + O2 = a 14alpha-formyl steroid + oxidized [NADPH--hemoprotein reductase] + 2 H2O + H(+). It catalyses the reaction a 14alpha-formyl steroid + reduced [NADPH--hemoprotein reductase] + O2 = a Delta(14) steroid + formate + oxidized [NADPH--hemoprotein reductase] + H2O + 2 H(+). It carries out the reaction lanosterol + 3 reduced [NADPH--hemoprotein reductase] + 3 O2 = 4,4-dimethyl-5alpha-cholesta-8,14,24-trien-3beta-ol + formate + 3 oxidized [NADPH--hemoprotein reductase] + 4 H2O + 4 H(+). The enzyme catalyses lanosterol + reduced [NADPH--hemoprotein reductase] + O2 = 32-hydroxylanosterol + oxidized [NADPH--hemoprotein reductase] + H2O + H(+). The catalysed reaction is 32-hydroxylanosterol + reduced [NADPH--hemoprotein reductase] + O2 = 32-oxolanosterol + oxidized [NADPH--hemoprotein reductase] + 2 H2O + H(+). It catalyses the reaction 32-oxolanosterol + reduced [NADPH--hemoprotein reductase] + O2 = 4,4-dimethyl-5alpha-cholesta-8,14,24-trien-3beta-ol + formate + oxidized [NADPH--hemoprotein reductase] + H2O + 2 H(+). It carries out the reaction eburicol + 3 reduced [NADPH--hemoprotein reductase] + 3 O2 = 14-demethyleburicol + formate + 3 oxidized [NADPH--hemoprotein reductase] + 4 H2O + 4 H(+). The enzyme catalyses eburicol + reduced [NADPH--hemoprotein reductase] + O2 = 32-hydroxyeburicol + oxidized [NADPH--hemoprotein reductase] + H2O + H(+). The catalysed reaction is 32-hydroxyeburicol + reduced [NADPH--hemoprotein reductase] + O2 = 32-oxoeburicol + oxidized [NADPH--hemoprotein reductase] + 2 H2O + H(+). It catalyses the reaction 32-oxoeburicol + reduced [NADPH--hemoprotein reductase] + O2 = 14-demethyleburicol + formate + oxidized [NADPH--hemoprotein reductase] + H2O + 2 H(+). It participates in steroid biosynthesis; sterol biosynthesis. Sterol 14-alpha demethylase; part of the gene cluster that mediates the biosynthesis of tetrahydropyranyl antifungal agent lanomycin that acts as an inhibitor of CYP51 and blocks the ergosterol biosynthesis. Sterol 14-alpha-demethylase plays a critical role in the biosynthesis of ergosterol, the major sterol component in fungal membranes that participates in a variety of functions. Acts as a self-resistant CYP51 that contains mutations found in CYP51s isolated from azole resistance strains and that is not inhibited by the final product of the cluster, lanomycin. This Pyrenophora dematioidea (Helminthosporium dematioideum) protein is Sterol 14-alpha demethylase.